A 109-amino-acid chain; its full sequence is Small ribosomal subunit protein bS18c (109 aa).

A disordered region spans residues 82–109 (GFERSESTPRTNALKPRNKNKQNNQTQF).

This sequence belongs to the bacterial ribosomal protein bS18 family. In terms of assembly, part of the 30S ribosomal subunit.

The protein localises to the plastid. This chain is Small ribosomal subunit protein bS18c, found in Cuscuta reflexa (Southern Asian dodder).